A 520-amino-acid polypeptide reads, in one-letter code: Ribonuclease Y (520 aa).

The chain crosses the membrane as a helical span at residues 5–25; sequence ITIISSLLFLIVGLVVGSLIF. The tract at residues 76-127 is disordered; sequence ELRGRRTETQKAENRLLQREENLDRKDTSLSKREATLERKEESISKRQQQIE. A KH domain is found at 210–273; that stretch reads TVSVVTLPND…EIARIALEKL (64 aa). An HD domain is found at 336 to 429; the sequence is VLNHSLEVSK…VAAADALSAA (94 aa).

Belongs to the RNase Y family.

The protein resides in the cell membrane. Its function is as follows. Endoribonuclease that initiates mRNA decay. The sequence is that of Ribonuclease Y from Listeria monocytogenes serotype 1/2a (strain 10403S).